A 436-amino-acid chain; its full sequence is D-amino acid dehydrogenase (436 aa).

3–17 contacts FAD; sequence IVVLGAGVVGVTSAY.

Belongs to the DadA oxidoreductase family. FAD is required as a cofactor.

The enzyme catalyses a D-alpha-amino acid + A + H2O = a 2-oxocarboxylate + AH2 + NH4(+). Its pathway is amino-acid degradation; D-alanine degradation; NH(3) and pyruvate from D-alanine: step 1/1. Oxidative deamination of D-amino acids. The sequence is that of D-amino acid dehydrogenase from Cereibacter sphaeroides (strain ATCC 17029 / ATH 2.4.9) (Rhodobacter sphaeroides).